The primary structure comprises 497 residues: Glycerol kinase (497 aa).

Thr13 contributes to the ADP binding site. 3 residues coordinate ATP: Thr13, Thr14, and Ser15. Thr13 contacts sn-glycerol 3-phosphate. Position 17 (Arg17) interacts with ADP. Sn-glycerol 3-phosphate contacts are provided by Arg83, Glu84, and Tyr135. Residues Arg83, Glu84, and Tyr135 each coordinate glycerol. Residue His231 is modified to Phosphohistidine; by HPr. Asp245 is a binding site for sn-glycerol 3-phosphate. The glycerol site is built by Asp245 and Gln246. ADP is bound by residues Thr267 and Gly310. ATP-binding residues include Thr267, Gly310, Gln314, and Gly411. ADP is bound by residues Gly411 and Asn415.

The protein belongs to the FGGY kinase family. Homotetramer and homodimer (in equilibrium). In terms of processing, the phosphoenolpyruvate-dependent sugar phosphotransferase system (PTS), including enzyme I, and histidine-containing protein (HPr) are required for the phosphorylation, which leads to the activation of the enzyme.

It catalyses the reaction glycerol + ATP = sn-glycerol 3-phosphate + ADP + H(+). It functions in the pathway polyol metabolism; glycerol degradation via glycerol kinase pathway; sn-glycerol 3-phosphate from glycerol: step 1/1. Activated by phosphorylation and inhibited by fructose 1,6-bisphosphate (FBP). Its function is as follows. Key enzyme in the regulation of glycerol uptake and metabolism. Catalyzes the phosphorylation of glycerol to yield sn-glycerol 3-phosphate. This chain is Glycerol kinase, found in Halalkalibacterium halodurans (strain ATCC BAA-125 / DSM 18197 / FERM 7344 / JCM 9153 / C-125) (Bacillus halodurans).